The sequence spans 130 residues: uncharacterized protein (130 aa).

Residues 1–26 (MKFIYKLLFILSIVLFLFNNIITING) form the signal peptide. An N-linked (GlcNAc...) asparagine glycan is attached at N88.

It localises to the secreted. This is an uncharacterized protein from Dictyostelium discoideum (Social amoeba).